The primary structure comprises 431 residues: ETS domain-containing protein Elk-4 (431 aa).

Positions 5–85 form a DNA-binding region, ETS; it reads ITLWQFLLQL…NGQKFVYKFV (81 aa). Positions 114-139 are disordered; that stretch reads SSSSKDVENGGKDKPPQPGAKTSSRN. Positions 118–128 are enriched in basic and acidic residues; that stretch reads KDVENGGKDKP. Lys167 participates in a covalent cross-link: Glycyl lysine isopeptide (Lys-Gly) (interchain with G-Cter in SUMO2). Ser180 is subject to Phosphoserine. Disordered regions lie at residues 251-282, 294-323, and 411-431; these read TTPP…DTDI, ENLS…KKPK, and TLSG…LQKT. Residues 261–273 are compositionally biased toward pro residues; the sequence is LQEPPRTPSPPLS. Positions 299–313 are enriched in basic and acidic residues; that stretch reads EPKDQDSVLLEKDKV.

The protein belongs to the ETS family. Interacts with SIRT7.

It is found in the nucleus. Functionally, involved in both transcriptional activation and repression. Interaction with SIRT7 leads to recruitment and stabilization of SIRT7 at promoters, followed by deacetylation of histone H3 at 'Lys-18' (H3K18Ac) and subsequent transcription repression. Forms a ternary complex with the serum response factor (SRF). Requires DNA-bound SRF for ternary complex formation and makes extensive DNA contacts to the 5'side of SRF, but does not bind DNA autonomously. The protein is ETS domain-containing protein Elk-4 (ELK4) of Homo sapiens (Human).